The chain runs to 205 residues: Putative 3-methyladenine DNA glycosylase (205 aa).

It belongs to the DNA glycosylase MPG family.

This chain is Putative 3-methyladenine DNA glycosylase, found in Bacillus cereus (strain AH187).